The chain runs to 337 residues: Viral cathepsin (337 aa).

The signal sequence occupies residues 1-18 (MYLIYYYTIIAVATASIA). A propeptide spans 19 to 126 (NEKIFYDIDS…VTVAGPSART (108 aa)) (activation peptide). Cystine bridges form between Cys-147-Cys-188, Cys-181-Cys-221, and Cys-276-Cys-324. Residue Cys-150 is part of the active site. Active-site residues include His-283 and Asn-303.

Belongs to the peptidase C1 family. Synthesized as an inactive proenzyme and activated by proteolytic removal of the inhibitory propeptide.

The enzyme catalyses Endopeptidase of broad specificity, hydrolyzing substrates of both cathepsin L and cathepsin B.. Functionally, cysteine protease that plays an essential role in host liquefaction to facilitate horizontal transmission of the virus. May participate in the degradation of foreign protein expressed by the baculovirus system. In Spodoptera litura multicapsid nucleopolyhedrovirus (SpltMNPV), this protein is Viral cathepsin (VCATH).